We begin with the raw amino-acid sequence, 157 residues long: Transcription elongation factor GreA (157 aa).

The protein belongs to the GreA/GreB family.

Necessary for efficient RNA polymerase transcription elongation past template-encoded arresting sites. The arresting sites in DNA have the property of trapping a certain fraction of elongating RNA polymerases that pass through, resulting in locked ternary complexes. Cleavage of the nascent transcript by cleavage factors such as GreA or GreB allows the resumption of elongation from the new 3'terminus. GreA releases sequences of 2 to 3 nucleotides. The sequence is that of Transcription elongation factor GreA from Azorhizobium caulinodans (strain ATCC 43989 / DSM 5975 / JCM 20966 / LMG 6465 / NBRC 14845 / NCIMB 13405 / ORS 571).